The primary structure comprises 266 residues: Undecaprenyl-diphosphatase (266 aa).

8 consecutive transmembrane segments (helical) span residues 1 to 21, 39 to 59, 87 to 107, 111 to 131, 149 to 169, 183 to 203, 218 to 238, and 246 to 266; these read MDTFQVIILALIQGLTEFLPI, QGLSFDVAVNTGSLFAVVIYF, WWIILATLPAVFFGFIAKDFI, LRSAGVIAVTTIVFGLLLWWA, ALLIGFAQALALIPGTSRSGA, AAARFSFLMSVPVSLGAAILV, ALTLGTVISFVAAYLCIHYFL, and MTPFVIYRLILGAVLCGFIFL.

It belongs to the UppP family.

It is found in the cell inner membrane. The catalysed reaction is di-trans,octa-cis-undecaprenyl diphosphate + H2O = di-trans,octa-cis-undecaprenyl phosphate + phosphate + H(+). Its function is as follows. Catalyzes the dephosphorylation of undecaprenyl diphosphate (UPP). Confers resistance to bacitracin. This Shewanella sp. (strain MR-7) protein is Undecaprenyl-diphosphatase.